The following is a 185-amino-acid chain: Ribosome-recycling factor (185 aa).

The protein belongs to the RRF family.

The protein resides in the cytoplasm. Functionally, responsible for the release of ribosomes from messenger RNA at the termination of protein biosynthesis. May increase the efficiency of translation by recycling ribosomes from one round of translation to another. The polypeptide is Ribosome-recycling factor (Pectobacterium atrosepticum (strain SCRI 1043 / ATCC BAA-672) (Erwinia carotovora subsp. atroseptica)).